Here is a 208-residue protein sequence, read N- to C-terminus: Ribosomal RNA large subunit methyltransferase E (208 aa).

Gly-62, Trp-64, Asp-82, Asp-98, and Asp-123 together coordinate S-adenosyl-L-methionine. The Proton acceptor role is filled by Lys-163.

This sequence belongs to the class I-like SAM-binding methyltransferase superfamily. RNA methyltransferase RlmE family.

The protein localises to the cytoplasm. It catalyses the reaction uridine(2552) in 23S rRNA + S-adenosyl-L-methionine = 2'-O-methyluridine(2552) in 23S rRNA + S-adenosyl-L-homocysteine + H(+). Its function is as follows. Specifically methylates the uridine in position 2552 of 23S rRNA at the 2'-O position of the ribose in the fully assembled 50S ribosomal subunit. This is Ribosomal RNA large subunit methyltransferase E from Actinobacillus pleuropneumoniae serotype 5b (strain L20).